Here is a 321-residue protein sequence, read N- to C-terminus: Probable transaldolase (321 aa).

The active-site Schiff-base intermediate with substrate is Lys-133.

The protein belongs to the transaldolase family. Type 1 subfamily. In terms of assembly, homodimer.

It localises to the cytoplasm. The enzyme catalyses D-sedoheptulose 7-phosphate + D-glyceraldehyde 3-phosphate = D-erythrose 4-phosphate + beta-D-fructose 6-phosphate. Its pathway is carbohydrate degradation; pentose phosphate pathway; D-glyceraldehyde 3-phosphate and beta-D-fructose 6-phosphate from D-ribose 5-phosphate and D-xylulose 5-phosphate (non-oxidative stage): step 2/3. Transaldolase is important for the balance of metabolites in the pentose-phosphate pathway. In Dictyostelium discoideum (Social amoeba), this protein is Probable transaldolase (tal).